We begin with the raw amino-acid sequence, 425 residues long: Enolase (425 aa).

Position 163 (glutamine 163) interacts with (2R)-2-phosphoglycerate. The active-site Proton donor is glutamate 205. 3 residues coordinate Mg(2+): aspartate 242, glutamate 286, and aspartate 313. (2R)-2-phosphoglycerate-binding residues include lysine 338, arginine 367, serine 368, and lysine 389. The Proton acceptor role is filled by lysine 338.

The protein belongs to the enolase family. Mg(2+) is required as a cofactor.

It localises to the cytoplasm. Its subcellular location is the secreted. It is found in the cell surface. It catalyses the reaction (2R)-2-phosphoglycerate = phosphoenolpyruvate + H2O. It functions in the pathway carbohydrate degradation; glycolysis; pyruvate from D-glyceraldehyde 3-phosphate: step 4/5. In terms of biological role, catalyzes the reversible conversion of 2-phosphoglycerate (2-PG) into phosphoenolpyruvate (PEP). It is essential for the degradation of carbohydrates via glycolysis. The protein is Enolase of Helicobacter hepaticus (strain ATCC 51449 / 3B1).